Reading from the N-terminus, the 304-residue chain is Putative S-adenosyl-L-methionine-dependent methyltransferase Mjls_1071 (304 aa).

S-adenosyl-L-methionine-binding positions include D130 and 159–160 (DL).

Belongs to the UPF0677 family.

Exhibits S-adenosyl-L-methionine-dependent methyltransferase activity. The sequence is that of Putative S-adenosyl-L-methionine-dependent methyltransferase Mjls_1071 from Mycobacterium sp. (strain JLS).